The primary structure comprises 122 residues: Large ribosomal subunit protein uL14 (122 aa).

Belongs to the universal ribosomal protein uL14 family. In terms of assembly, part of the 50S ribosomal subunit. Forms a cluster with proteins L3 and L19. In the 70S ribosome, L14 and L19 interact and together make contacts with the 16S rRNA in bridges B5 and B8.

In terms of biological role, binds to 23S rRNA. Forms part of two intersubunit bridges in the 70S ribosome. The protein is Large ribosomal subunit protein uL14 of Shewanella halifaxensis (strain HAW-EB4).